Here is a 279-residue protein sequence, read N- to C-terminus: Putative polysaccharide deacetylase YxkH (279 aa).

An N-terminal signal peptide occupies residues 1 to 19 (MKRLFLSIFLLGSCLALAA). Cys20 carries the N-palmitoyl cysteine lipid modification. A lipid anchor (S-diacylglycerol cysteine) is attached at Cys20. The disordered stretch occupies residues 29 to 51 (QPMPKAEQKKPEKKAVQVQKKED). A compositionally biased stretch (basic and acidic residues) spans 34 to 51 (AEQKKPEKKAVQVQKKED). A NodB homology domain is found at 119 to 279 (KCVLITFDDG…AFGAYIESMK (161 aa)).

The protein belongs to the polysaccharide deacetylase family.

It is found in the cell membrane. This Bacillus subtilis (strain 168) protein is Putative polysaccharide deacetylase YxkH (yxkH).